The chain runs to 255 residues: MSLAVRVIPCLDVDAGRVVKGVNFLDLRDAGDPVERAAAYDRAGADELTFLDVTASVSDRGTMLDVVRRTAESVFIPLTVGGGVRQVSDVDALLRAGADKVGVNTAAIARPELIAEIADRFGRQVLVLSLDVRRASSGTTASGFEVTTHGGRRGAGIDAIDWARRGAELGAGEILLNSMSADGTKTGFDLELIRAVRAVVNVPVVASGGAGAAGHFPPAIDAGADAVLAASVFHFGELTVGEVKDALRGKGHPVR.

Active-site residues include Asp12 and Asp131.

It belongs to the HisA/HisF family. Heterodimer of HisH and HisF.

The protein resides in the cytoplasm. It catalyses the reaction 5-[(5-phospho-1-deoxy-D-ribulos-1-ylimino)methylamino]-1-(5-phospho-beta-D-ribosyl)imidazole-4-carboxamide + L-glutamine = D-erythro-1-(imidazol-4-yl)glycerol 3-phosphate + 5-amino-1-(5-phospho-beta-D-ribosyl)imidazole-4-carboxamide + L-glutamate + H(+). It functions in the pathway amino-acid biosynthesis; L-histidine biosynthesis; L-histidine from 5-phospho-alpha-D-ribose 1-diphosphate: step 5/9. Its function is as follows. IGPS catalyzes the conversion of PRFAR and glutamine to IGP, AICAR and glutamate. The HisF subunit catalyzes the cyclization activity that produces IGP and AICAR from PRFAR using the ammonia provided by the HisH subunit. The chain is Imidazole glycerol phosphate synthase subunit HisF from Salinispora tropica (strain ATCC BAA-916 / DSM 44818 / JCM 13857 / NBRC 105044 / CNB-440).